A 398-amino-acid chain; its full sequence is Mitochondrial protein import protein mas5 (398 aa).

The 82-residue stretch at 7–88 (GYYKVLELSP…KKKKEYDSGM (82 aa)) folds into the J domain. The CR-type zinc finger occupies 139 to 219 (GKVSKFNVRT…CNGAEYIQDK (81 aa)). 144-146 (FNV) provides a ligand contact to substrate. 8 residues coordinate Zn(2+): Cys152, Cys155, Cys166, Cys169, Cys192, Cys195, Cys207, and Cys210. CXXCXGXG motif repeat units follow at residues 152–159 (CTTCDGKG), 166–173 (CKKCNGNG), 192–199 (CDGCDGSG), and 207–214 (CSTCNGAE). Substrate-binding positions include 221-222 (MF) and 253-255 (VIF). A disordered region spans residues 367–386 (FGSMPEPERDHEDASEEGAQ).

This sequence belongs to the DnaJ family. In terms of assembly, homodimer. The cofactor is Zn(2+).

It is found in the cytoplasm. Its function is as follows. Probably involved in mitosomal protein import. This chain is Mitochondrial protein import protein mas5 (MAS5), found in Encephalitozoon cuniculi (strain GB-M1) (Microsporidian parasite).